A 250-amino-acid chain; its full sequence is tRNA (guanine-N(1)-)-methyltransferase (250 aa).

Residues Gly-116 and 136–141 each bind S-adenosyl-L-methionine; that span reads IGDYVL.

The protein belongs to the RNA methyltransferase TrmD family. As to quaternary structure, homodimer.

It is found in the cytoplasm. The enzyme catalyses guanosine(37) in tRNA + S-adenosyl-L-methionine = N(1)-methylguanosine(37) in tRNA + S-adenosyl-L-homocysteine + H(+). Specifically methylates guanosine-37 in various tRNAs. The sequence is that of tRNA (guanine-N(1)-)-methyltransferase from Stutzerimonas stutzeri (strain A1501) (Pseudomonas stutzeri).